The chain runs to 460 residues: Elongation factor 1-alpha 3 (460 aa).

The tr-type G domain maps to 6 to 243; sequence KTHINIVVIG…DCIIPPQRPT (238 aa). A G1 region spans residues 15–22; that stretch reads GHVDSGKS. The G2 stretch occupies residues 71–75; that stretch reads GITID. The G3 stretch occupies residues 92–95; that stretch reads DAPG. The segment at 154–157 is G4; it reads NKMD. The G5 stretch occupies residues 195–197; the sequence is SGF. Glu-302 and Glu-375 each carry 5-glutamyl glycerylphosphorylethanolamine.

Belongs to the TRAFAC class translation factor GTPase superfamily. Classic translation factor GTPase family. EF-Tu/EF-1A subfamily.

The protein localises to the cytoplasm. This protein promotes the GTP-dependent binding of aminoacyl-tRNA to the A-site of ribosomes during protein biosynthesis. In Oscheius tipulae, this protein is Elongation factor 1-alpha 3 (eft-3).